The sequence spans 362 residues: Mortality factor 4-like protein 1 (362 aa).

Positions 12-51 (QEGERVLCFHGPLLYEAKCVKVAIKDKQVKYFIHYSGWNK) constitute a Tudor-knot domain. Positions 26–62 (YEAKCVKVAIKDKQVKYFIHYSGWNKKSAVRPRRSEK) are interaction with KAT8. Residues 113–182 (RELQKANQEQ…RKKRARVDPT (70 aa)) are disordered. The interval 133 to 266 (PGKKTSGLQQ…VAGIKEYFNV (134 aa)) is sufficient for interaction with SIN3A. A Nuclear localization signal motif is present at residues 135–146 (KKTSGLQQKNVE). Lysine 143 carries the N6-acetyllysine modification. The segment at 164-230 (STSETPQPPR…FYLPAKKNVD (67 aa)) is interaction with RB1-1. Residues 188–342 (TFMNRVEVKV…FLKYLAKNSA (155 aa)) form a sufficient for interaction with PHF12 region. In terms of domain architecture, MRG spans 191 to 362 (NRVEVKVKIP…APPEYHRKAV (172 aa)). An interaction with RB1-2 region spans residues 323–344 (LALLLNYLHDFLKYLAKNSATL).

As to quaternary structure, component of the NuA4 histone acetyltransferase complex which contains the catalytic subunit KAT5/TIP60 and the subunits EP400, TRRAP/PAF400, BRD8/SMAP, EPC1, DMAP1/DNMAP1, RUVBL1/TIP49, RUVBL2, ING3, actin, ACTL6A/BAF53A, MORF4L1/MRG15, MORF4L2/MRGX, MRGBP, YEATS4/GAS41, VPS72/YL1 and MEAF6. The NuA4 complex interacts with MYC and the adenovirus E1A protein. MORF4L1 may also participate in the formation of NuA4 related complexes which lack the KAT5/TIP60 catalytic subunit, but which include the SWI/SNF related protein SRCAP. Component of the mSin3A histone deacetylase complex, which includes SIN3A, HDAC2, ARID4B, MORF4L1, RBBP4/RbAp48, and RBBP7/RbAp46. May also interact with PHF12 and one or more as yet undefined members of the TLE (transducin-like enhancer of split) family of transcriptional repressors. Component of the SIN3B complex, which includes SIN3B, HDAC2 or HDAC1, PHF12 and MORF4L1. Interacts with RB1 and KAT8. Interacts with the N-terminus of MRFAP1. Found in a complex composed of MORF4L1, MRFAP1 and RB1. Interacts with the entire BRCA complex, which contains BRCA1, PALB2, BRCA2 and RAD51. Interacts with PALB2. Forms a complex with MSL1 and NUPR1.

The protein resides in the nucleus. In terms of biological role, component of the NuA4 histone acetyltransferase (HAT) complex which is involved in transcriptional activation of select genes principally by acetylation of nucleosomal histones H4 and H2A. This modification may both alter nucleosome - DNA interactions and promote interaction of the modified histones with other proteins which positively regulate transcription. This complex may be required for the activation of transcriptional programs associated with oncogene and proto-oncogene mediated growth induction, tumor suppressor mediated growth arrest and replicative senescence, apoptosis, and DNA repair. The NuA4 complex ATPase and helicase activities seem to be, at least in part, contributed by the association of RUVBL1 and RUVBL2 with EP400. NuA4 may also play a direct role in DNA repair when directly recruited to sites of DNA damage. As part of the SIN3B complex represses transcription and counteracts the histone acetyltransferase activity of EP300 through the recognition H3K27ac marks by PHF12 and the activity of the histone deacetylase HDAC2. SIN3B complex is recruited downstream of the constitutively active genes transcriptional start sites through interaction with histones and mitigates histone acetylation and RNA polymerase II progression within transcribed regions contributing to the regulation of transcription. Required for homologous recombination repair (HRR) and resistance to mitomycin C (MMC). Involved in the localization of PALB2, BRCA2 and RAD51, but not BRCA1, to DNA-damage foci. The protein is Mortality factor 4-like protein 1 (Morf4l1) of Mus musculus (Mouse).